The sequence spans 573 residues: Urease subunit alpha 2 (573 aa).

A Urease domain is found at 135–573 (GGMDTHVHYI…ISLNQLYFFS (439 aa)). Ni(2+) is bound by residues H140, H142, and K223. The residue at position 223 (K223) is an N6-carboxylysine. Residue H225 coordinates substrate. Ni(2+) contacts are provided by H252 and H278. The active-site Proton donor is H326. D366 contacts Ni(2+).

It belongs to the metallo-dependent hydrolases superfamily. Urease alpha subunit family. As to quaternary structure, heterotrimer of UreA (gamma), UreB (beta) and UreC (alpha) subunits. Three heterotrimers associate to form the active enzyme. It depends on Ni cation as a cofactor. In terms of processing, carboxylation allows a single lysine to coordinate two nickel ions.

The protein resides in the cytoplasm. It carries out the reaction urea + 2 H2O + H(+) = hydrogencarbonate + 2 NH4(+). The protein operates within nitrogen metabolism; urea degradation; CO(2) and NH(3) from urea (urease route): step 1/1. Functionally, disrupting the ure2 operon has no effect on urease activity or pathogen survival in BALB/c mice when administered orally. This Brucella abortus (strain 2308) protein is Urease subunit alpha 2.